The sequence spans 346 residues: Methionine import ATP-binding protein MetN 1 (346 aa).

Residues 2-241 form the ABC transporter domain; the sequence is IELKNVSKVF…PQHVTTKKFV (240 aa). 38–45 lines the ATP pocket; sequence GYSGAGKS.

This sequence belongs to the ABC transporter superfamily. Methionine importer (TC 3.A.1.24) family. As to quaternary structure, the complex is composed of two ATP-binding proteins (MetN), two transmembrane proteins (MetI) and a solute-binding protein (MetQ).

The protein resides in the cell membrane. The enzyme catalyses L-methionine(out) + ATP + H2O = L-methionine(in) + ADP + phosphate + H(+). It catalyses the reaction D-methionine(out) + ATP + H2O = D-methionine(in) + ADP + phosphate + H(+). Its function is as follows. Part of the ABC transporter complex MetNIQ involved in methionine import. Responsible for energy coupling to the transport system. In Bacillus cereus (strain ZK / E33L), this protein is Methionine import ATP-binding protein MetN 1.